A 494-amino-acid chain; its full sequence is Inosine-5'-monophosphate dehydrogenase (494 aa).

CBS domains follow at residues 93–154 (IIRN…DEKI) and 158–217 (MTTN…CKDS). Residues aspartate 251 and 301 to 303 (GIG) contribute to the NAD(+) site. K(+)-binding residues include glycine 303 and glycine 305. Residue serine 306 participates in IMP binding. Residue cysteine 308 coordinates K(+). Cysteine 308 functions as the Thioimidate intermediate in the catalytic mechanism. IMP contacts are provided by residues 341-343 (DGG), 364-365 (GS), and 388-392 (YRGMG). The active-site Proton acceptor is the arginine 406. Residue glutamate 421 coordinates IMP. Residues glutamate 475, serine 476, and histidine 477 each contribute to the K(+) site.

The protein belongs to the IMPDH/GMPR family. As to quaternary structure, homotetramer. K(+) is required as a cofactor.

It catalyses the reaction IMP + NAD(+) + H2O = XMP + NADH + H(+). It functions in the pathway purine metabolism; XMP biosynthesis via de novo pathway; XMP from IMP: step 1/1. With respect to regulation, mycophenolic acid (MPA) is a non-competitive inhibitor that prevents formation of the closed enzyme conformation by binding to the same site as the amobile flap. In contrast, mizoribine monophosphate (MZP) is a competitive inhibitor that induces the closed conformation. MPA is a potent inhibitor of mammalian IMPDHs but a poor inhibitor of the bacterial enzymes. MZP is a more potent inhibitor of bacterial IMPDH. Its function is as follows. Catalyzes the conversion of inosine 5'-phosphate (IMP) to xanthosine 5'-phosphate (XMP), the first committed and rate-limiting step in the de novo synthesis of guanine nucleotides, and therefore plays an important role in the regulation of cell growth. This Chlorobaculum tepidum (strain ATCC 49652 / DSM 12025 / NBRC 103806 / TLS) (Chlorobium tepidum) protein is Inosine-5'-monophosphate dehydrogenase.